Consider the following 308-residue polypeptide: tRNA dimethylallyltransferase (308 aa).

10–17 serves as a coordination point for ATP; the sequence is GPTGVGKT. 12-17 provides a ligand contact to substrate; the sequence is TGVGKT. The interval 35 to 38 is interaction with substrate tRNA; sequence DSRQ.

The protein belongs to the IPP transferase family. Monomer. Mg(2+) serves as cofactor.

It carries out the reaction adenosine(37) in tRNA + dimethylallyl diphosphate = N(6)-dimethylallyladenosine(37) in tRNA + diphosphate. Its function is as follows. Catalyzes the transfer of a dimethylallyl group onto the adenine at position 37 in tRNAs that read codons beginning with uridine, leading to the formation of N6-(dimethylallyl)adenosine (i(6)A). In Fervidobacterium nodosum (strain ATCC 35602 / DSM 5306 / Rt17-B1), this protein is tRNA dimethylallyltransferase.